Here is a 132-residue protein sequence, read N- to C-terminus: MATRHQVRQSVISLLYAFELNSQNNVFVDEILDEKKIRNEQKNFTLNLYHGILDNLNNIDETLNSFLNDNQITALGHVERAILRLGAYELLFTDTPSAIVINEAIELAKELANDNSPKFINGVLDALIKAKK.

This sequence belongs to the NusB family.

Its function is as follows. Involved in transcription antitermination. Required for transcription of ribosomal RNA (rRNA) genes. Binds specifically to the boxA antiterminator sequence of the ribosomal RNA (rrn) operons. This Campylobacter jejuni subsp. jejuni serotype O:6 (strain 81116 / NCTC 11828) protein is Transcription antitermination protein NusB.